The sequence spans 119 residues: Beta-2-microglobulin (119 aa).

Positions 1-20 are cleaved as a signal peptide; it reads MARFVVVALLVLLSLSGLEA. An Ig-like C1-type domain is found at 25–114; that stretch reads PKIQVYSRHP…VTLSTPKTVK (90 aa). Residues Cys-45 and Cys-100 are joined by a disulfide bond.

This sequence belongs to the beta-2-microglobulin family. As to quaternary structure, heterodimer of an alpha chain and a beta chain. Beta-2-microglobulin is the beta-chain of major histocompatibility complex class I molecules.

It localises to the secreted. Its function is as follows. Component of the class I major histocompatibility complex (MHC). Involved in the presentation of peptide antigens to the immune system. This Aotus azarae (Azara's night monkey) protein is Beta-2-microglobulin (B2M).